A 153-amino-acid polypeptide reads, in one-letter code: Lipoprotein signal peptidase (153 aa).

3 helical membrane passes run 6 to 26 (IVAVIVLLLIGLDQLVKSYIV), 60 to 80 (QQLLFAVITLVVVIGAIWYLH), and 85 to 105 (DSFWMVLGLTLIIAGGLGNFI). Active-site residues include D115 and D131. A helical transmembrane segment spans residues 124–144 (FAIFNVADSYLTVGVIILLIA).

Belongs to the peptidase A8 family.

The protein localises to the cell membrane. The catalysed reaction is Release of signal peptides from bacterial membrane prolipoproteins. Hydrolyzes -Xaa-Yaa-Zaa-|-(S,diacylglyceryl)Cys-, in which Xaa is hydrophobic (preferably Leu), and Yaa (Ala or Ser) and Zaa (Gly or Ala) have small, neutral side chains.. Its pathway is protein modification; lipoprotein biosynthesis (signal peptide cleavage). Its function is as follows. This protein specifically catalyzes the removal of signal peptides from prolipoproteins. This Streptococcus pneumoniae (strain ATCC BAA-255 / R6) protein is Lipoprotein signal peptidase.